A 135-amino-acid polypeptide reads, in one-letter code: Probable disulfide formation protein (135 aa).

A helical membrane pass occupies residues 7–26; the sequence is SYCLYFAWLVSCIGTLMSVY. Cysteine 36 and cysteine 39 are oxidised to a cystine. The next 2 helical transmembrane spans lie at 41–60 and 67–84; these read YQRICLFPLVVILGISAYLD and YALPLALIGFCIAIYQVC. Cysteine 96 and cysteine 101 are disulfide-bonded. The helical transmembrane segment at 109–131 threads the bilayer; it reads GFITMPMASALAFFAIANLLIFA.

Belongs to the DsbB family. BdbC subfamily.

It is found in the cell inner membrane. Functionally, required for disulfide bond formation in some proteins. The sequence is that of Probable disulfide formation protein from Chlamydia muridarum (strain MoPn / Nigg).